A 226-amino-acid chain; its full sequence is ATP synthase F(0) complex subunit a (226 aa).

The next 6 helical transmembrane spans lie at 5–25, 68–88, 97–117, 138–158, 160–180, and 189–209; these read LFAS…LIIL, WSLM…LGLL, QLSM…TTGF, IPML…ALAV, LTAN…ATLA, and TLII…VALI.

The protein belongs to the ATPase A chain family. In terms of assembly, component of the ATP synthase complex composed at least of ATP5F1A/subunit alpha, ATP5F1B/subunit beta, ATP5MC1/subunit c (homooctomer), MT-ATP6/subunit a, MT-ATP8/subunit 8, ATP5ME/subunit e, ATP5MF/subunit f, ATP5MG/subunit g, ATP5MK/subunit k, ATP5MJ/subunit j, ATP5F1C/subunit gamma, ATP5F1D/subunit delta, ATP5F1E/subunit epsilon, ATP5PF/subunit F6, ATP5PB/subunit b, ATP5PD/subunit d, ATP5PO/subunit OSCP. ATP synthase complex consists of a soluble F(1) head domain (subunits alpha(3) and beta(3)) - the catalytic core - and a membrane F(0) domain - the membrane proton channel (subunits c, a, 8, e, f, g, k and j). These two domains are linked by a central stalk (subunits gamma, delta, and epsilon) rotating inside the F1 region and a stationary peripheral stalk (subunits F6, b, d, and OSCP). Interacts with DNAJC30; interaction is direct.

It localises to the mitochondrion inner membrane. It carries out the reaction H(+)(in) = H(+)(out). Its function is as follows. Subunit a, of the mitochondrial membrane ATP synthase complex (F(1)F(0) ATP synthase or Complex V) that produces ATP from ADP in the presence of a proton gradient across the membrane which is generated by electron transport complexes of the respiratory chain. ATP synthase complex consist of a soluble F(1) head domain - the catalytic core - and a membrane F(1) domain - the membrane proton channel. These two domains are linked by a central stalk rotating inside the F(1) region and a stationary peripheral stalk. During catalysis, ATP synthesis in the catalytic domain of F(1) is coupled via a rotary mechanism of the central stalk subunits to proton translocation. With the subunit c (ATP5MC1), forms the proton-conducting channel in the F(0) domain, that contains two crucial half-channels (inlet and outlet) that facilitate proton movement from the mitochondrial intermembrane space (IMS) into the matrix. Protons are taken up via the inlet half-channel and released through the outlet half-channel, following a Grotthuss mechanism. This is ATP synthase F(0) complex subunit a from Gorilla gorilla gorilla (Western lowland gorilla).